Here is a 290-residue protein sequence, read N- to C-terminus: GTPase Era (290 aa).

The Era-type G domain maps to 2–169 (KSGFAAILGR…KNKIYENFSE (168 aa)). Residues 10–17 (GRPSTGKS) are G1. A GTP-binding site is contributed by 10–17 (GRPSTGKS). Residues 36-40 (QTTRN) are G2. The G3 stretch occupies residues 57 to 60 (DTPG). GTP is bound by residues 57–61 (DTPGF) and 119–122 (NKVD). The G4 stretch occupies residues 119–122 (NKVD). Positions 148–150 (ISA) are G5. The KH type-2 domain occupies 200 to 276 (LKEELPYSLY…NLFLQVKLKK (77 aa)).

The protein belongs to the TRAFAC class TrmE-Era-EngA-EngB-Septin-like GTPase superfamily. Era GTPase family. As to quaternary structure, monomer.

Its subcellular location is the cytoplasm. It is found in the cell inner membrane. An essential GTPase that binds both GDP and GTP, with rapid nucleotide exchange. Plays a role in 16S rRNA processing and 30S ribosomal subunit biogenesis and possibly also in cell cycle regulation and energy metabolism. This chain is GTPase Era, found in Borreliella afzelii (strain PKo) (Borrelia afzelii).